A 1337-amino-acid polypeptide reads, in one-letter code: Receptor-type tyrosine-protein phosphatase eta (1337 aa).

The signal sequence occupies residues 1–35 (MKPAAREARLPPRSPGLRWALPLLLLLLRLGQILC). Residues 36–975 (AGGTPSPIPD…LPQDPGVICG (940 aa)) lie on the Extracellular side of the membrane. Polar residues-rich tracts occupy residues 67-82 (SFHKQNGTGTPQVETN) and 89-119 (SSGANDSLRTPEQGSNGTDGASQKTPSSTGP). The disordered stretch occupies residues 67 to 124 (SFHKQNGTGTPQVETNTSEDGESSGANDSLRTPEQGSNGTDGASQKTPSSTGPSPVFD). 34 N-linked (GlcNAc...) asparagine glycosylation sites follow: N72, N82, N93, N104, N142, N172, N192, N231, N258, N278, N342, N351, N376, N391, N396, N413, N431, N501, N525, N536, N582, N603, N618, N628, N637, N666, N669, N761, N772, N784, N790, N824, N910, and N937. Fibronectin type-III domains lie at 121–209 (PVFD…EPIP), 207–291 (PIPV…EGGL), 271–364 (NPYL…EFRT), 368–456 (QVFD…PPVP), 457–541 (VSDF…TVPS), 542–623 (AVFD…TAQY), 625–720 (RPSN…TDPA), 721–817 (SMAS…TDPP), and 816–902 (PPPP…SEVL). The interval 278-327 (NKTKGDPLGTEGGLDASNTERSRAGSPTAPVHDESLVGPVDPSSGQQSRD) is disordered. The chain crosses the membrane as a helical span at residues 976–996 (AVFGCIFGALVIVTVGGFIFW). Topologically, residues 997–1337 (RKKRKDAKNN…TFGKTNGYIA (341 aa)) are cytoplasmic. S1009 is subject to Phosphoserine. The Tyrosine-protein phosphatase domain maps to 1041-1298 (FAEEYEDLKL…VFLNQCVLDI (258 aa)). Substrate-binding positions include D1205, 1239 to 1245 (CSAGVGR), and Q1283. The active-site Phosphocysteine intermediate is the C1239.

Belongs to the protein-tyrosine phosphatase family. Receptor class 3 subfamily. As to quaternary structure, monomer. Interacts with CTNNB1 (phosphorylated) and JUP (phosphorylated). Interacts with FLT3 (phosphorylated). Interacts with GAB1 and GRB2. Post-translationally, N- and O-glycosylated. In terms of processing, N-glycosylated. As to expression, expressed in the promyelocytic cell line HL-60, the granulocyte-macrophage colony-stimulating factor-dependent leukemic cell line F-36P, and the IL3 and erythropoietin-dependent leukemic cell line F-36E. Expressed predominantly in epithelial cells and lymphocytes. Enhanced expression at high cell density. Expressed in the brain.

The protein resides in the cell membrane. It is found in the cell projection. Its subcellular location is the ruffle membrane. The protein localises to the cell junction. It localises to the secreted. The protein resides in the extracellular space. The enzyme catalyses O-phospho-L-tyrosyl-[protein] + H2O = L-tyrosyl-[protein] + phosphate. Tyrosine phosphatase which dephosphorylates or contributes to the dephosphorylation of CTNND1, FLT3, PDGFRB, MET, KDR, LYN, SRC, MAPK1, MAPK3, EGFR, TJP1, OCLN, PIK3R1 and PIK3R2. Plays a role in cell adhesion, migration, proliferation and differentiation. Has a role in megakaryocytes and platelet formation. Involved in vascular development. Regulator of macrophage adhesion and spreading. Positively affects cell-matrix adhesion. Positive regulator of platelet activation and thrombosis. Negative regulator of cell proliferation. Negative regulator of PDGF-stimulated cell migration; through dephosphorylation of PDGFR. Positive regulator of endothelial cell survival, as well as of VEGF-induced SRC and AKT activation; through KDR dephosphorylation. Negative regulator of EGFR signaling pathway; through EGFR dephosphorylation. Enhances the barrier function of epithelial junctions during reassembly. Negatively regulates T-cell receptor (TCR) signaling. Upon T-cell TCR activation, it is up-regulated and excluded from the immunological synapses, while upon T-cell-antigen presenting cells (APC) disengagement, it is no longer excluded and can dephosphorylate PLCG1 and LAT to down-regulate prolongation of signaling. Its function is as follows. Activates angiogenesis and cell migration. Downregulates the expression of the endothelial adhesion molecules ICAM1 and VCAM1. This chain is Receptor-type tyrosine-protein phosphatase eta (PTPRJ), found in Homo sapiens (Human).